The sequence spans 94 residues: Preprofallaxidin-9 (94 aa).

Residues 1–22 form the signal peptide; sequence MASLKKSLFLVLFLGLVSLSIC. A propeptide spanning residues 23 to 46 is cleaved from the precursor; it reads EEEKRENEEDAEDENHEEESEEKR. The interval 27-46 is disordered; that stretch reads RENEEDAEDENHEEESEEKR. Positions 30 to 42 are enriched in acidic residues; that stretch reads EEDAEDENHEEES. Residue L62 is modified to Leucine amide. Residues 66 to 70 constitute a propeptide that is removed on maturation; it reads SEEKR. Methionine amide is present on M75. Residues 79–83 constitute a propeptide that is removed on maturation; sequence SEEKR. Position 88 is a methionine amide (M88). The propeptide occupies 92 to 94; that stretch reads SEE.

It belongs to the frog skin active peptide (FSAP) family. Brevinin subfamily. Expressed by the skin glands.

It is found in the secreted. Its function is as follows. Fallaxidin-1.3 shows no antibacterial activity against Gram-positive or Gram-negative bacteria. Does not inhibit the formation of NO by neuronal nitric oxide synthase. Has no effect on splenocyte proliferation or smooth muscle contraction. Functionally, fallaxidin-3.2 shows antibacterial activity against the Gram-positive bacteria E.faecalis (MIC=100 uM) and L.lactis (MIC=500 uM). No antibacterial activity against the Gram-positive bacteria B.cereus, L.innocua, M.luteus, S.epidermidis, S.uberis and S.aureus, or the Gram-negative bacteria E.cloacae and E.coli. This chain is Preprofallaxidin-9, found in Litoria fallax (Eastern dwarf tree frog).